The sequence spans 729 residues: 1,4-alpha-glucan branching enzyme GlgB (729 aa).

Residue D405 is the Nucleophile of the active site. The Proton donor role is filled by E458.

It belongs to the glycosyl hydrolase 13 family. GlgB subfamily. As to quaternary structure, monomer.

It carries out the reaction Transfers a segment of a (1-&gt;4)-alpha-D-glucan chain to a primary hydroxy group in a similar glucan chain.. Its pathway is glycan biosynthesis; glycogen biosynthesis. Catalyzes the formation of the alpha-1,6-glucosidic linkages in glycogen by scission of a 1,4-alpha-linked oligosaccharide from growing alpha-1,4-glucan chains and the subsequent attachment of the oligosaccharide to the alpha-1,6 position. The polypeptide is 1,4-alpha-glucan branching enzyme GlgB (Mannheimia succiniciproducens (strain KCTC 0769BP / MBEL55E)).